Consider the following 355-residue polypeptide: Acyl-CoA desaturase 1 (355 aa).

Over 1-68 the chain is Cytoplasmic; sequence MPAHMLQEIS…EGPPPKLEYV (68 aa). A compositionally biased stretch (low complexity) spans 9 to 20; sequence ISSSYTTTTTIT. Positions 9–33 are disordered; it reads ISSSYTTTTTITAPPSGNEREKVKT. A helical membrane pass occupies residues 69 to 89; that stretch reads WRNIILMVLLHLGGLYGIILV. Asparagine 71 is a substrate binding site. Residues 90 to 93 are Lumenal-facing; the sequence is PSCK. Residues 94–114 form a helical membrane-spanning segment; that stretch reads LYTCLFGIFYYMTSALGITAG. The Cytoplasmic segment spans residues 115 to 213; the sequence is AHRLWSHRTY…EKLVMFQRRY (99 aa). Fe cation contacts are provided by histidine 116 and histidine 121. The Histidine box-1 motif lies at 116 to 121; it reads HRLWSH. Residues asparagine 144, arginine 151, and aspartate 152 each coordinate substrate. Fe cation-binding residues include histidine 153, histidine 156, and histidine 157. The Histidine box-2 signature appears at 153 to 157; sequence HRAHH. Substrate contacts are provided by arginine 184 and lysine 185. Residues 214-233 traverse the membrane as a helical segment; sequence YKPGLLLMCFILPTLVPWYC. The Lumenal segment spans residues 234–237; it reads WGET. The chain crosses the membrane as a helical span at residues 238 to 259; that stretch reads FVNSLFVSTFLRYTLVLNATWL. A substrate-binding site is contributed by tryptophan 258. Residues 260–355 lie on the Cytoplasmic side of the membrane; sequence VNSAAHLYGY…RTGDGSHKSS (96 aa). The Fe cation site is built by histidine 265, histidine 294, histidine 297, and histidine 298. A Histidine box-3 motif is present at residues 294–298; the sequence is HNYHH.

Belongs to the fatty acid desaturase type 1 family. Fe(2+) serves as cofactor. As to expression, detected in liver (at protein level). Detected in skin and liver. Detected in sebaceous gland, but not in hair follicle. Detected in white and brown adipose tissue, eyelid, Harderian gland, and at lower levels in Meibomian gland, eyeball and adrenal gland. Highly expressed in liver, and detected at low levels in brain, heart, lung, stomach, skeletal muscle and kidney.

The protein resides in the endoplasmic reticulum membrane. It localises to the microsome membrane. It carries out the reaction octadecanoyl-CoA + 2 Fe(II)-[cytochrome b5] + O2 + 2 H(+) = (9Z)-octadecenoyl-CoA + 2 Fe(III)-[cytochrome b5] + 2 H2O. In terms of biological role, stearoyl-CoA desaturase that utilizes O(2) and electrons from reduced cytochrome b5 to introduce the first double bond into saturated fatty acyl-CoA substrates. Catalyzes the insertion of a cis double bond at the Delta-9 position into fatty acyl-CoA substrates including palmitoyl-CoA and stearoyl-CoA. Gives rise to a mixture of 16:1 and 18:1 unsaturated fatty acids. Plays an important role in lipid biosynthesis. Plays an important role in regulating the expression of genes that are involved in lipogenesis and in regulating mitochondrial fatty acid oxidation. Plays an important role in body energy homeostasis. Contributes to the biosynthesis of membrane phospholipids, cholesterol esters and triglycerides. Required for normal development of sebaceous glands. Required for the biosynthesis of normal levels of Delta-9 unsaturated fatty acids and 1-alkyl-2,3-diacylglycerol in the Harderian gland. Required for normal production of meibum, an oily material that prevents drying of the cornea. This Mus musculus (Mouse) protein is Acyl-CoA desaturase 1 (Scd1).